The following is a 219-amino-acid chain: Ribose-5-phosphate isomerase A (219 aa).

Residues 28–31 (TGST), 81–84 (DGAD), and 94–97 (KGGG) contribute to the substrate site. Residue E103 is the Proton acceptor of the active site. Residue K121 participates in substrate binding.

This sequence belongs to the ribose 5-phosphate isomerase family. Homodimer.

The catalysed reaction is aldehydo-D-ribose 5-phosphate = D-ribulose 5-phosphate. Its pathway is carbohydrate degradation; pentose phosphate pathway; D-ribose 5-phosphate from D-ribulose 5-phosphate (non-oxidative stage): step 1/1. Catalyzes the reversible conversion of ribose-5-phosphate to ribulose 5-phosphate. This is Ribose-5-phosphate isomerase A from Shewanella oneidensis (strain ATCC 700550 / JCM 31522 / CIP 106686 / LMG 19005 / NCIMB 14063 / MR-1).